Reading from the N-terminus, the 313-residue chain is 3'-5' exoribonuclease YhaM (313 aa).

Residues 22 to 90 constitute a DNA-binding region (OB); sequence SSVKGTASNG…QLKIRQIRQA (69 aa). The region spanning 163–279 is the HD domain; sequence HVVSMLRLAK…LHQIDLMDAS (117 aa).

Belongs to the YhaM family.

In terms of biological role, shows a 3'-5' exoribonuclease activity. The protein is 3'-5' exoribonuclease YhaM of Listeria innocua serovar 6a (strain ATCC BAA-680 / CLIP 11262).